The primary structure comprises 398 residues: Succinate--CoA ligase [ADP-forming] subunit beta (398 aa).

The ATP-grasp domain maps to 9–253; that stretch reads MALLNERGVS…AGASDPLEQE (245 aa). ATP-binding positions include Lys-46, 53 to 55, Val-111, and Glu-116; that span reads GRG. Mg(2+) is bound by residues Asn-208 and Asp-222. Substrate-binding positions include Asn-273 and 330 to 332; that span reads GIM.

Belongs to the succinate/malate CoA ligase beta subunit family. Heterotetramer of two alpha and two beta subunits. Mg(2+) is required as a cofactor.

It carries out the reaction succinate + ATP + CoA = succinyl-CoA + ADP + phosphate. It catalyses the reaction GTP + succinate + CoA = succinyl-CoA + GDP + phosphate. The protein operates within carbohydrate metabolism; tricarboxylic acid cycle; succinate from succinyl-CoA (ligase route): step 1/1. In terms of biological role, succinyl-CoA synthetase functions in the citric acid cycle (TCA), coupling the hydrolysis of succinyl-CoA to the synthesis of either ATP or GTP and thus represents the only step of substrate-level phosphorylation in the TCA. The beta subunit provides nucleotide specificity of the enzyme and binds the substrate succinate, while the binding sites for coenzyme A and phosphate are found in the alpha subunit. In Zymomonas mobilis subsp. mobilis (strain ATCC 31821 / ZM4 / CP4), this protein is Succinate--CoA ligase [ADP-forming] subunit beta.